A 208-amino-acid polypeptide reads, in one-letter code: Thioesterase 1/protease 1/lysophospholipase L1 (208 aa).

Positions 1–26 (MMNFNNVFRWHLPFLFLVLLTFRAAA) are cleaved as a signal peptide. Ser-36 acts as the Nucleophile in catalysis. 2 residues coordinate substrate: Gly-70 and Asn-99. Catalysis depends on residues Asp-180 and His-183.

The protein belongs to the 'GDSL' lipolytic enzyme family. In terms of assembly, monomer or homotetramer.

Its subcellular location is the periplasm. The enzyme catalyses a fatty acyl-CoA + H2O = a fatty acid + CoA + H(+). It carries out the reaction hexadecanoyl-CoA + H2O = hexadecanoate + CoA + H(+). The catalysed reaction is (9Z)-hexadecenoyl-CoA + H2O = (9Z)-hexadecenoate + CoA + H(+). It catalyses the reaction octadecanoyl-CoA + H2O = octadecanoate + CoA + H(+). The enzyme catalyses (9Z)-octadecenoyl-CoA + H2O = (9Z)-octadecenoate + CoA + H(+). It carries out the reaction (9Z)-octadecenoyl-[ACP] + H2O = (9Z)-octadecenoate + holo-[ACP] + H(+). The catalysed reaction is (11Z)-octadecenoyl-CoA + H2O = (11Z)-octadecenoate + CoA + H(+). It catalyses the reaction tetradecanoyl-CoA + H2O = tetradecanoate + CoA + H(+). The enzyme catalyses (5Z,8Z,11Z,14Z)-eicosatetraenoyl-CoA + H2O = (5Z,8Z,11Z,14Z)-eicosatetraenoate + CoA + H(+). It carries out the reaction dodecanoyl-CoA + H2O = dodecanoate + CoA + H(+). The catalysed reaction is decanoyl-CoA + H2O = decanoate + CoA + H(+). It catalyses the reaction hexanoyl-CoA + H2O = hexanoate + CoA + H(+). The enzyme catalyses a 1-acyl-sn-glycero-3-phosphocholine + H2O = sn-glycerol 3-phosphocholine + a fatty acid + H(+). It carries out the reaction a phenyl acetate + H2O = a phenol + acetate + H(+). The catalysed reaction is a butanoate ester + H2O = an aliphatic alcohol + butanoate + H(+). It catalyses the reaction a hexanoate ester + H2O = an aliphatic alcohol + hexanoate + H(+). The enzyme catalyses an octanoate ester + H2O = an aliphatic alcohol + octanoate + H(+). Its function is as follows. TesA is a multifunctional esterase that can act as a thioesterase, arylesterase, lysophospholipase and protease. In Escherichia coli O6:H1 (strain CFT073 / ATCC 700928 / UPEC), this protein is Thioesterase 1/protease 1/lysophospholipase L1 (tesA).